Consider the following 295-residue polypeptide: Shikimate dehydrogenase (NADP(+)) (295 aa).

Residues 22 to 24 and serine 69 contribute to the shikimate site; that span reads SLS. The active-site Proton acceptor is the lysine 73. Shikimate-binding residues include asparagine 94 and aspartate 111. Residues 135–139 and valine 236 each bind NADP(+); that span reads GAGGA. Tyrosine 238 is a binding site for shikimate. Glycine 260 lines the NADP(+) pocket.

It belongs to the shikimate dehydrogenase family. As to quaternary structure, homodimer.

It carries out the reaction shikimate + NADP(+) = 3-dehydroshikimate + NADPH + H(+). It functions in the pathway metabolic intermediate biosynthesis; chorismate biosynthesis; chorismate from D-erythrose 4-phosphate and phosphoenolpyruvate: step 4/7. Functionally, involved in the biosynthesis of the chorismate, which leads to the biosynthesis of aromatic amino acids. Catalyzes the reversible NADPH linked reduction of 3-dehydroshikimate (DHSA) to yield shikimate (SA). The sequence is that of Shikimate dehydrogenase (NADP(+)) from Streptococcus uberis (strain ATCC BAA-854 / 0140J).